The following is a 932-amino-acid chain: MTTGFLQKIFGSRNQRLVKQYQKTVTTINALETQIEKLTDDQLRGKTDEFRQRVAAGESLDKLLPEAFAVCREASRRVLKMRHFDVQMIGGMVLHYGKIAEMRTGEGKTLVATLPVYLNALAGRGVHVVTVNDYLAQRDAEWMARLYNFLGLSVGINLSGMEHDQKQQAYAADITYGTNNEFGFDYLRDNMVYETDARVQRALNFAVVDEVDSILIDEARTPLIISGQAEDHTELYVRMNALPPLLERQIGEEKADGTGVEKPGDYTLDEKARQVFLTESGHEKAERLLAEWGLIGEGESLYAPQNITLMHHVYAALRAHTLFHKDQHYVVQNGEVVIVDEFTGRLMAGRRWSDGLHQAVEAKEHVKIQSENQTLASITFQNYFRMYAKLAGMTGTADTEAYEFNEIYGLETVVIPTNRPPKRIDKQDQIYKTAKERYDAVIRDIRDCYERGQPVLVGTTSIENSELLSHLLKQAGLPHEVLNAKQHEREAAIVAEAGRPKRVTIATNMAGRGTDIVLGGNAEKQAAFIEADEAIPADEKARRIQQLHDEWETLHEQVKAAGGLHIIGTERHESRRIDNQLRGRAGRQGDPGSSRFYLSLDDPLLRIFAGDRVRSIMDRLKMPEGEAIEAGIVTRSIESAQRKVEARNFDIRKQLLEYDDVSNDQRKVIYQQRNELLEAHDITETITAMRHGVVTEVVRQFVPEGSIEEQWDVPELEEALRNDWQLDLAIQEMVNESSSITAEEILDAVMTAADEQYEAKVAMVGRESFSAFERSVMLQTVDRLWREHLAALDHLRQGIHLRGYAQKNPKQEYKREAFELFAAMLEAIKQEVTRVVMNVQIQSPEQLEQAAEQIEERGGHLENVEYQHADYAEAGAPVANVAVAAAATATADMVGSAMTHSGPGGEMPKVGRNDPCPCGSGKKYKQCHGKLS.

ATP-binding positions include Gln-87, 105–109 (GEGKT), and Asp-515. Zn(2+) is bound by residues Cys-916, Cys-918, Cys-927, and His-928.

The protein belongs to the SecA family. Monomer and homodimer. Part of the essential Sec protein translocation apparatus which comprises SecA, SecYEG and auxiliary proteins SecDF-YajC and YidC. It depends on Zn(2+) as a cofactor.

Its subcellular location is the cell inner membrane. The protein resides in the cytoplasm. The enzyme catalyses ATP + H2O + cellular proteinSide 1 = ADP + phosphate + cellular proteinSide 2.. Functionally, part of the Sec protein translocase complex. Interacts with the SecYEG preprotein conducting channel. Has a central role in coupling the hydrolysis of ATP to the transfer of proteins into and across the cell membrane, serving both as a receptor for the preprotein-SecB complex and as an ATP-driven molecular motor driving the stepwise translocation of polypeptide chains across the membrane. The sequence is that of Protein translocase subunit SecA from Burkholderia lata (strain ATCC 17760 / DSM 23089 / LMG 22485 / NCIMB 9086 / R18194 / 383).